We begin with the raw amino-acid sequence, 908 residues long: Translation initiation factor IF-2 (908 aa).

Residues 52-318 are disordered; it reads QSHGQEEKRR…RSSQSSQHKF (267 aa). Polar residues predominate over residues 65–84; the sequence is KSKTTSTARVTGSSGKSKSV. Basic and acidic residues-rich tracts occupy residues 94–108, 120–138, 176–185, 193–238, 270–280, and 294–303; these read FEKP…ELAA, AAKD…EERQ, IEVKPKDQPK, PKVE…EQMR, SFEKERREIKR, and KNQDEREIKN. The region spanning 409–578 is the tr-type G domain; it reads TRPPVVTIMG…SLQAELMELE (170 aa). Residues 418–425 are G1; sequence GHVDHGKT. 418–425 contributes to the GTP binding site; the sequence is GHVDHGKT. A G2 region spans residues 443-447; sequence GITQH. A G3 region spans residues 464–467; sequence DTPG. Residues 464–468 and 518–521 contribute to the GTP site; these read DTPGH and NKMD. The interval 518–521 is G4; it reads NKMD. Residues 554-556 are G5; it reads SAK.

The protein belongs to the TRAFAC class translation factor GTPase superfamily. Classic translation factor GTPase family. IF-2 subfamily.

It localises to the cytoplasm. In terms of biological role, one of the essential components for the initiation of protein synthesis. Protects formylmethionyl-tRNA from spontaneous hydrolysis and promotes its binding to the 30S ribosomal subunits. Also involved in the hydrolysis of GTP during the formation of the 70S ribosomal complex. This is Translation initiation factor IF-2 from Psychrobacter cryohalolentis (strain ATCC BAA-1226 / DSM 17306 / VKM B-2378 / K5).